The sequence spans 323 residues: Phosphate acyltransferase (323 aa).

This sequence belongs to the PlsX family. Homodimer. Probably interacts with PlsY.

Its subcellular location is the cytoplasm. The catalysed reaction is a fatty acyl-[ACP] + phosphate = an acyl phosphate + holo-[ACP]. It participates in lipid metabolism; phospholipid metabolism. Catalyzes the reversible formation of acyl-phosphate (acyl-PO(4)) from acyl-[acyl-carrier-protein] (acyl-ACP). This enzyme utilizes acyl-ACP as fatty acyl donor, but not acyl-CoA. The chain is Phosphate acyltransferase from Finegoldia magna (strain ATCC 29328 / DSM 20472 / WAL 2508) (Peptostreptococcus magnus).